Reading from the N-terminus, the 265-residue chain is PBSX phage terminase small subunit (265 aa).

The disordered stretch occupies residues 241 to 265 (KQKAEKTDDSQEPIEIMIKRKERKS).

The protein to B.subtilis YqaS and B.subtilis phage SPP1 terminase small subunit. In terms of assembly, dimer of a small and a large subunit.

Functions as a terminase. The protein is PBSX phage terminase small subunit (xtmA) of Bacillus subtilis (strain 168).